Here is a 150-residue protein sequence, read N- to C-terminus: Large ribosomal subunit protein uL11 (150 aa).

It belongs to the universal ribosomal protein uL11 family. As to quaternary structure, part of the ribosomal stalk of the 50S ribosomal subunit. Interacts with L10 and the large rRNA to form the base of the stalk. L10 forms an elongated spine to which L12 dimers bind in a sequential fashion forming a multimeric L10(L12)X complex. Post-translationally, one or more lysine residues are methylated.

In terms of biological role, forms part of the ribosomal stalk which helps the ribosome interact with GTP-bound translation factors. This chain is Large ribosomal subunit protein uL11, found in Cereibacter sphaeroides (strain KD131 / KCTC 12085) (Rhodobacter sphaeroides).